We begin with the raw amino-acid sequence, 362 residues long: NAD(P)H-quinone oxidoreductase subunit 1, chloroplastic (362 aa).

8 consecutive transmembrane segments (helical) span residues I29–L49, I103–L123, I128–G148, A164–L184, F202–L222, Y247–S267, T303–I323, and L335–T355.

The protein belongs to the complex I subunit 1 family. NDH is composed of at least 16 different subunits, 5 of which are encoded in the nucleus.

Its subcellular location is the plastid. It localises to the chloroplast thylakoid membrane. It carries out the reaction a plastoquinone + NADH + (n+1) H(+)(in) = a plastoquinol + NAD(+) + n H(+)(out). The catalysed reaction is a plastoquinone + NADPH + (n+1) H(+)(in) = a plastoquinol + NADP(+) + n H(+)(out). Functionally, NDH shuttles electrons from NAD(P)H:plastoquinone, via FMN and iron-sulfur (Fe-S) centers, to quinones in the photosynthetic chain and possibly in a chloroplast respiratory chain. The immediate electron acceptor for the enzyme in this species is believed to be plastoquinone. Couples the redox reaction to proton translocation, and thus conserves the redox energy in a proton gradient. In Triticum aestivum (Wheat), this protein is NAD(P)H-quinone oxidoreductase subunit 1, chloroplastic.